A 71-amino-acid polypeptide reads, in one-letter code: MKEGIHPKYEVISATCSCGNEFETSSTLCKNIHLDVCSACHPFYTGKQKILDTGGRVDRFNKRFGALGSKK.

Residues C16, C18, C37, and C40 each contribute to the Zn(2+) site.

This sequence belongs to the bacterial ribosomal protein bL31 family. Type A subfamily. In terms of assembly, part of the 50S ribosomal subunit. Zn(2+) serves as cofactor.

In terms of biological role, binds the 23S rRNA. This chain is Large ribosomal subunit protein bL31, found in Pseudoalteromonas translucida (strain TAC 125).